We begin with the raw amino-acid sequence, 226 residues long: 3-dehydroquinate dehydratase (226 aa).

3-dehydroquinate-binding positions include 29–31 and R56; that span reads EFR. The active-site Proton donor/acceptor is H120. The active-site Schiff-base intermediate with substrate is K146. 3 residues coordinate 3-dehydroquinate: R187, T208, and Q212.

Belongs to the type-I 3-dehydroquinase family. Homodimer.

The enzyme catalyses 3-dehydroquinate = 3-dehydroshikimate + H2O. The protein operates within metabolic intermediate biosynthesis; chorismate biosynthesis; chorismate from D-erythrose 4-phosphate and phosphoenolpyruvate: step 3/7. Its function is as follows. Involved in the third step of the chorismate pathway, which leads to the biosynthesis of aromatic amino acids. Catalyzes the cis-dehydration of 3-dehydroquinate (DHQ) and introduces the first double bond of the aromatic ring to yield 3-dehydroshikimate. This chain is 3-dehydroquinate dehydratase, found in Halobacterium salinarum (strain ATCC 700922 / JCM 11081 / NRC-1) (Halobacterium halobium).